Reading from the N-terminus, the 277-residue chain is Protein G1-like2 (277 aa).

The segment covering 1 to 16 has biased composition (gly residues); it reads MQGGGGGDSSGGGGGE. Disordered stretches follow at residues 1–28, 141–203, and 225–245; these read MQGG…SQKR, RGIA…GHFF, and HQVS…TNTG. Positions 19–28 are enriched in basic and acidic residues; that stretch reads RPSRYESQKR. An ALOG domain is found at 22-149; sequence RYESQKRRDW…ARGIAYEKKR (128 aa). The Nuclear localization signal signature appears at 147 to 151; sequence KKRRK. Over residues 154-177 the composition is skewed to low complexity; that stretch reads PTSSSSSQAAAAAAAATSPASPAA. Pro residues predominate over residues 178 to 187; sequence SPTPPPPPPT.

This sequence belongs to the plant homeotic and developmental regulators ALOG protein family.

The protein resides in the nucleus. In terms of biological role, probable transcription regulator that acts as a developmental regulator by promoting cell growth in response to light. This chain is Protein G1-like2 (G1L2), found in Oryza sativa subsp. japonica (Rice).